A 287-amino-acid polypeptide reads, in one-letter code: 4-hydroxybenzoate octaprenyltransferase (287 aa).

Helical transmembrane passes span 30–50 (ALWIASDGHPTWPLLVIFTVG), 89–109 (WEAVALAAALSLLAFLLILPL), 133–153 (FFAIPQAYLGIAFGFGIPMAF), 158–178 (GHVPLLAWVMLLANVFWSVAY), 199–221 (ALTFGRFDVAAIMICYAATLGIY), and 267–287 (NNWLGGALFVGIAAHYAAGSF).

This sequence belongs to the UbiA prenyltransferase family. Mg(2+) serves as cofactor.

The protein localises to the cell inner membrane. It catalyses the reaction all-trans-octaprenyl diphosphate + 4-hydroxybenzoate = 4-hydroxy-3-(all-trans-octaprenyl)benzoate + diphosphate. It participates in cofactor biosynthesis; ubiquinone biosynthesis. In terms of biological role, catalyzes the prenylation of para-hydroxybenzoate (PHB) with an all-trans polyprenyl group. Mediates the second step in the final reaction sequence of ubiquinone-8 (UQ-8) biosynthesis, which is the condensation of the polyisoprenoid side chain with PHB, generating the first membrane-bound Q intermediate 3-octaprenyl-4-hydroxybenzoate. The chain is 4-hydroxybenzoate octaprenyltransferase from Paraburkholderia phytofirmans (strain DSM 17436 / LMG 22146 / PsJN) (Burkholderia phytofirmans).